Here is a 154-residue protein sequence, read N- to C-terminus: Low molecular weight protein-tyrosine-phosphatase PtpA (154 aa).

Catalysis depends on cysteine 8, which acts as the Nucleophile. The active site involves arginine 14. Catalysis depends on aspartate 120, which acts as the Proton donor.

Belongs to the low molecular weight phosphotyrosine protein phosphatase family. As to quaternary structure, interacts with host CORO1A. Post-translationally, phosphorylations at Tyr-122 and Tyr-123 are essential for phosphatase activity.

The protein resides in the secreted. The catalysed reaction is O-phospho-L-tyrosyl-[protein] + H2O = L-tyrosyl-[protein] + phosphate. Secreted tyrosine phosphatase that plays a critical role during infection as a bacterial effector protein that counteracts host defenses. Required for intramacrophage survival. The polypeptide is Low molecular weight protein-tyrosine-phosphatase PtpA (ptpA) (Staphylococcus aureus (strain MRSA252)).